The primary structure comprises 503 residues: Beta-amylase Tri a 17 (503 aa).

Asp-51, His-91, and Asp-99 together coordinate substrate. Residue Glu-184 is the Proton donor of the active site. Residues Lys-293, His-298, and Thr-340 each contribute to the substrate site. The active-site Proton acceptor is Glu-378. Substrate-binding positions include 379 to 380 (NA) and Arg-418.

This sequence belongs to the glycosyl hydrolase 14 family.

The enzyme catalyses Hydrolysis of (1-&gt;4)-alpha-D-glucosidic linkages in polysaccharides so as to remove successive maltose units from the non-reducing ends of the chains.. This Triticum aestivum (Wheat) protein is Beta-amylase Tri a 17 (BMY1).